The following is a 412-amino-acid chain: cAMP-dependent protein kinase regulatory subunit (412 aa).

The span at 1-11 (MSNYSHSSNNP) shows a compositional bias: polar residues. Residues 1-146 (MSNYSHSSNN…TPPSHPKSEE (146 aa)) form a disordered region. Positions 16–29 (STKEDKPSSFHKIA) are enriched in basic and acidic residues. The segment at 23-159 (SSFHKIAEDE…RLKTAVSNNF (137 aa)) is dimerization and phosphorylation. Composition is skewed to polar residues over residues 49 to 60 (NADNSAGGNNPL) and 119 to 138 (TSVS…SWTP). At S120 the chain carries Phosphoserine. 3',5'-cyclic AMP contacts are provided by residues 160–291 (LFSH…EEVP), E238, R247, 292–405 (LLSS…TEYS), E359, and R368.

It belongs to the cAMP-dependent kinase regulatory chain family. Tetramer, composed of 2 regulatory (R) and 2 catalytic (C) subunits. In the presence of cAMP it dissociates into 2 active monomeric C subunits and an R dimer.

The chain is cAMP-dependent protein kinase regulatory subunit (pkaR) from Emericella nidulans (strain FGSC A4 / ATCC 38163 / CBS 112.46 / NRRL 194 / M139) (Aspergillus nidulans).